Here is a 609-residue protein sequence, read N- to C-terminus: Threonine--tRNA ligase (609 aa).

The segment at 1-145 is editing domain; that stretch reads MRLLLIHSDY…TIVPGAGAAV (145 aa). Residues 194–485 form a catalytic region; the sequence is IHVDLMRSKE…TANQSVPQLP (292 aa). Zn(2+)-binding residues include Cys286, His338, and His458.

It belongs to the class-II aminoacyl-tRNA synthetase family. As to quaternary structure, homodimer. Zn(2+) is required as a cofactor.

It localises to the cytoplasm. The enzyme catalyses tRNA(Thr) + L-threonine + ATP = L-threonyl-tRNA(Thr) + AMP + diphosphate + H(+). Functionally, catalyzes the attachment of threonine to tRNA(Thr) in a two-step reaction: L-threonine is first activated by ATP to form Thr-AMP and then transferred to the acceptor end of tRNA(Thr). Also edits incorrectly charged L-seryl-tRNA(Thr). This is Threonine--tRNA ligase from Methanosphaerula palustris (strain ATCC BAA-1556 / DSM 19958 / E1-9c).